Consider the following 346-residue polypeptide: uncharacterized protein (346 aa).

The helical transmembrane segment at 7–27 (AMVILLIICGTYVLFIQYGSV) threads the bilayer. The interval 29–48 (EKKSNDSEPQVSNEEAQSGK) is disordered. Residues 35-44 (SEPQVSNEEA) are compositionally biased toward polar residues. Residues 231 to 342 (LDLTNVIRVK…VDRKYYTQNF (112 aa)) enclose the SCP domain.

It localises to the cell membrane. This is an uncharacterized protein from Bacillus subtilis (strain 168).